The primary structure comprises 491 residues: Glutamate--tRNA ligase (491 aa).

The short motif at 10 to 20 is the 'HIGH' region element; that stretch reads PSPTGYLHIGG. Residues 243–247 carry the 'KMSKS' region motif; that stretch reads KISKR. An ATP-binding site is contributed by Lys246.

Belongs to the class-I aminoacyl-tRNA synthetase family. Glutamate--tRNA ligase type 1 subfamily. Monomer.

It localises to the cytoplasm. The enzyme catalyses tRNA(Glu) + L-glutamate + ATP = L-glutamyl-tRNA(Glu) + AMP + diphosphate. Functionally, catalyzes the attachment of glutamate to tRNA(Glu) in a two-step reaction: glutamate is first activated by ATP to form Glu-AMP and then transferred to the acceptor end of tRNA(Glu). This is Glutamate--tRNA ligase from Desulfotalea psychrophila (strain LSv54 / DSM 12343).